Reading from the N-terminus, the 822-residue chain is LPS-assembly protein LptD (822 aa).

An N-terminal signal peptide occupies residues 1 to 37; that stretch reads MRRASRSPFILSPVAHAVSRLVLCATLGWTYAGSGHA. Residues 38–97 are disordered; that stretch reads QVPAPAGGSEVPLGARPPASAPVAAQQETPLKLKSSPALAEEVPNGPGDEGPTFVFGDSV.

Belongs to the LptD family. As to quaternary structure, component of the lipopolysaccharide transport and assembly complex. Interacts with LptE and LptA.

Its subcellular location is the cell outer membrane. Together with LptE, is involved in the assembly of lipopolysaccharide (LPS) at the surface of the outer membrane. The sequence is that of LPS-assembly protein LptD from Polaromonas sp. (strain JS666 / ATCC BAA-500).